A 75-amino-acid polypeptide reads, in one-letter code: Cytochrome c oxidase assembly factor 5 (75 aa).

In terms of domain architecture, CHCH spans 28-66 (QTDCVLQEGKSPKECLKEGYCKALQVTFFECKRSILDTR). Positions 31-42 (CVLQEGKSPKEC) match the Cx10C motif motif. 2 disulfides stabilise this stretch: C31–C58 and C42–C48. The Cx9C motif motif lies at 48–58 (CKALQVTFFEC).

Belongs to the PET191 family.

Functionally, involved in an early step of the mitochondrial complex IV assembly process. The protein is Cytochrome c oxidase assembly factor 5 (coa5) of Xenopus tropicalis (Western clawed frog).